The chain runs to 515 residues: SWI/SNF global transcription activator complex subunit snf59 (515 aa).

Residues 1-226 (MEEEDITLEH…IHHVDSKNEE (226 aa)) are disordered. Basic and acidic residues-rich tracts occupy residues 7-37 (TLEH…DNSN), 50-59 (EEPKYHDNSN), 73-85 (EPEH…KEST), 94-103 (EEPKHHDNSN), and 116-125 (EEPKHHDSSN). Over residues 126–136 (KESTNLDNSNM) the composition is skewed to polar residues. The segment covering 140–226 (ENQKNFKIEE…IHHVDSKNEE (87 aa)) has biased composition (basic and acidic residues).

This sequence belongs to the RSC7/SWP82 family. SWP82 subfamily. In terms of assembly, component of the SWI/SNF global transcription activator complex composed of at least arp9, arp42, snf5, snf22, snf30, snf59, sol1, ssr1, ssr2, ssr3, ssr4 and tfg3.

It localises to the nucleus. Its function is as follows. Component of the SWI/SNF complex, an ATP-dependent chromatin remodeling complex, which is required for the positive and negative regulation of gene expression of a large number of genes. It changes chromatin structure by altering DNA-histone contacts within a nucleosome, leading eventually to a change in nucleosome position, thus facilitating or repressing binding of gene-specific transcription factors. The polypeptide is SWI/SNF global transcription activator complex subunit snf59 (snf59) (Schizosaccharomyces pombe (strain 972 / ATCC 24843) (Fission yeast)).